The chain runs to 849 residues: G-type lectin S-receptor-like serine/threonine-protein kinase B120 (849 aa).

A signal peptide spans 1–25; it reads MRFFRKTSLYLSLFLYFFLYESSMA. In terms of domain architecture, Bulb-type lectin spans 26–153; that stretch reads ANTIRRGESL…DTDRPIWESF (128 aa). Residues 26–438 are Extracellular-facing; sequence ANTIRRGESL…SEVGENRKTK (413 aa). N-linked (GlcNAc...) asparagine glycosylation is found at Asn-110, Asn-191, Asn-210, Asn-230, Asn-273, and Asn-282. One can recognise an EGF-like; atypical domain in the interval 295–332; the sequence is PDSECDQYNRCGKFGICDMKGSNGICSCIHGYEQVSVG. Cystine bridges form between Cys-299/Cys-311 and Cys-305/Cys-320. 3 N-linked (GlcNAc...) asparagine glycosylation sites follow: Asn-333, Asn-349, and Asn-388. Residues 346–427 form the PAN domain; it reads CERNISVGED…GGSSLHIRLA (82 aa). Intrachain disulfides connect Cys-381/Cys-402 and Cys-385/Cys-391. Residues 439–459 traverse the membrane as a helical segment; it reads IAVIVAVLVGVILIGIFALLL. The Cytoplasmic segment spans residues 460-849; it reads WRFKRKKDVS…EITSTVVLGR (390 aa). One can recognise a Protein kinase domain in the interval 529-814; sequence FCKENELGRG…TLAAPRQPTF (286 aa). ATP is bound by residues 535–543 and Lys-557; that span reads LGRGGFGPV. Ser-563 bears the Phosphoserine mark. Positions 618–635 are caM-binding; the sequence is TKQALIDWKLRFSIIEGI. Asp-654 functions as the Proton acceptor in the catalytic mechanism. 2 positions are modified to phosphoserine: Ser-658 and Ser-671. At Thr-688 the chain carries Phosphothreonine. Phosphoserine occurs at positions 732 and 837. Thr-844 carries the phosphothreonine modification.

Belongs to the protein kinase superfamily. Ser/Thr protein kinase family.

The protein resides in the cell membrane. It catalyses the reaction L-seryl-[protein] + ATP = O-phospho-L-seryl-[protein] + ADP + H(+). The catalysed reaction is L-threonyl-[protein] + ATP = O-phospho-L-threonyl-[protein] + ADP + H(+). This is G-type lectin S-receptor-like serine/threonine-protein kinase B120 (B120) from Arabidopsis thaliana (Mouse-ear cress).